The following is a 459-amino-acid chain: UDP-N-acetylmuramate--L-alanine ligase (459 aa).

ATP is bound at residue 118–124 (GTHGKTT).

Belongs to the MurCDEF family.

The protein resides in the cytoplasm. The enzyme catalyses UDP-N-acetyl-alpha-D-muramate + L-alanine + ATP = UDP-N-acetyl-alpha-D-muramoyl-L-alanine + ADP + phosphate + H(+). It functions in the pathway cell wall biogenesis; peptidoglycan biosynthesis. Its function is as follows. Cell wall formation. The protein is UDP-N-acetylmuramate--L-alanine ligase of Clostridium beijerinckii (strain ATCC 51743 / NCIMB 8052) (Clostridium acetobutylicum).